Here is a 179-residue protein sequence, read N- to C-terminus: Large ribosomal subunit protein uL5 (179 aa).

Belongs to the universal ribosomal protein uL5 family. In terms of assembly, part of the 50S ribosomal subunit; part of the 5S rRNA/L5/L18/L25 subcomplex. Contacts the 5S rRNA and the P site tRNA. Forms a bridge to the 30S subunit in the 70S ribosome.

This is one of the proteins that bind and probably mediate the attachment of the 5S RNA into the large ribosomal subunit, where it forms part of the central protuberance. In the 70S ribosome it contacts protein S13 of the 30S subunit (bridge B1b), connecting the 2 subunits; this bridge is implicated in subunit movement. Contacts the P site tRNA; the 5S rRNA and some of its associated proteins might help stabilize positioning of ribosome-bound tRNAs. In Prochlorococcus marinus (strain MIT 9313), this protein is Large ribosomal subunit protein uL5.